A 317-amino-acid chain; its full sequence is (R)-citramalyl-CoA lyase (317 aa).

The Pyruvate carboxyltransferase domain occupies 4-281 (VTIVDVAPRD…PTGIDLSALI (278 aa)). R12 provides a ligand contact to substrate. A divalent metal cation-binding residues include D13, H214, and H216. C247 is an active-site residue. An a divalent metal cation-binding site is contributed by N256.

Belongs to the HMG-CoA lyase family. As to quaternary structure, homodimer. The cofactor is Mn(2+). It depends on Co(2+) as a cofactor. Ni(2+) is required as a cofactor. Requires Mg(2+) as cofactor.

It carries out the reaction (3R)-citramalyl-CoA = pyruvate + acetyl-CoA. With respect to regulation, activated by dithioerythritol (DTE) (in vitro). In terms of biological role, involved in the glyoxylate assimilation cycle used to regenerate acetyl-CoA and produce pyruvate as universal precursor for biosynthesis. Catalyzes the cleavage of (R)-citramalyl-CoA to yield acetyl-CoA and pyruvate. The sequence is that of (R)-citramalyl-CoA lyase (ccl) from Chloroflexus aurantiacus (strain ATCC 29366 / DSM 635 / J-10-fl).